The chain runs to 580 residues: Glutamyl-tRNA(Gln) amidotransferase subunit B-2, chloroplastic/mitochondrial (580 aa).

Low complexity-rich tracts occupy residues 20-35 (RRDA…ATVS) and 42-59 (AVST…SAAV). Positions 20 to 64 (RRDATAAASTSAATVSRGRRARAVSTTTTTSSSSSSSAAVDARDA) are disordered.

It belongs to the GatB/GatE family. GatB subfamily. In terms of assembly, subunit of the heterotrimeric GatCAB amidotransferase (AdT) complex, composed of A, B and C subunits.

It is found in the mitochondrion. It localises to the plastid. The protein localises to the chloroplast. The catalysed reaction is L-glutamyl-tRNA(Gln) + L-glutamine + ATP + H2O = L-glutaminyl-tRNA(Gln) + L-glutamate + ADP + phosphate + H(+). In terms of biological role, allows the formation of correctly charged Gln-tRNA(Gln) through the transamidation of misacylated Glu-tRNA(Gln) in chloroplasts and mitochondria. The reaction takes place in the presence of glutamine and ATP through an activated gamma-phospho-Glu-tRNA(Gln). This chain is Glutamyl-tRNA(Gln) amidotransferase subunit B-2, chloroplastic/mitochondrial, found in Micromonas pusilla (strain CCMP1545) (Picoplanktonic green alga).